We begin with the raw amino-acid sequence, 529 residues long: MIRGMSNLKESSDFVASSYVRLGGLMDDPAATGGDNPHKVAMLGLTFDDVLLLPAASDVVPATADISSQLTKKIRLKVPLVSSAMDTVTEARMAIAMARAGGMGVLHRNLPVGEQAGQVETVKRSEAGMVTDPVTCRPDNTLAQVGALCARFRISGLPVVDDSGALAGIITNRDMRFEVDQSKQVAEVMTKTPLITAAEGVSADAALGLLRRNKIEKLPVVDGHGRLTGLITVKDFVKTEQHPLATKDNDGRLLVGAAVGVGGDAWVRAMMLVDAGVDVLIVDTAHAHNRLVLDMVGKLKVEIGDRVQVIGGNVATRSAAAALVEAGADAVKVGVGPGSTCTTRVVAGVGAPQITAILEAVAACGPAGVPVIADGGLQYSGDIAKALAAGASTTMLGSLLAGTAEAPGELIFVNGKQFKSYRGMGSLGAMQGRGGDKSYSKDRYFADDALSEDKLVPEGIEGRVPFRGPLSSVIHQLVGGLRAAMGYTGSPTIEVLQQAQFVRITPAGLKESHPHDVAMTVEAPNYYPR.

CBS domains are found at residues 129–185 (MVTD…SKQV) and 189–246 (MTKT…PLAT). Residues Asp283 and 334–336 (GVG) each bind NAD(+). Gly336 and Gly338 together coordinate K(+). Ser339 provides a ligand contact to IMP. K(+) is bound at residue Cys341. The Thioimidate intermediate role is filled by Cys341. IMP-binding positions include 374-376 (DGG), 397-398 (GS), and 421-425 (YRGMG). Residue Arg443 is the Proton acceptor of the active site. Residue Glu458 coordinates IMP. Residues Glu511, Ser512, and His513 each contribute to the K(+) site.

The protein belongs to the IMPDH/GMPR family. In terms of assembly, homotetramer. K(+) serves as cofactor.

It catalyses the reaction IMP + NAD(+) + H2O = XMP + NADH + H(+). It functions in the pathway purine metabolism; XMP biosynthesis via de novo pathway; XMP from IMP: step 1/1. With respect to regulation, mycophenolic acid (MPA) is a non-competitive inhibitor that prevents formation of the closed enzyme conformation by binding to the same site as the amobile flap. In contrast, mizoribine monophosphate (MZP) is a competitive inhibitor that induces the closed conformation. MPA is a potent inhibitor of mammalian IMPDHs but a poor inhibitor of the bacterial enzymes. MZP is a more potent inhibitor of bacterial IMPDH. Catalyzes the conversion of inosine 5'-phosphate (IMP) to xanthosine 5'-phosphate (XMP), the first committed and rate-limiting step in the de novo synthesis of guanine nucleotides, and therefore plays an important role in the regulation of cell growth. This Mycobacterium leprae (strain TN) protein is Inosine-5'-monophosphate dehydrogenase.